The chain runs to 124 residues: MKFAVAIAFTLLVCVFAQEEEEPVTCGGKQCKPNSCCVQNSHGKGKDSPRCHPLGKLNNPCEVEPNENGIYSQHCPCGEGLSCTKVGEPNKLRCQEESGKSDKSKESQGSDESEESEESKESCG.

The signal sequence occupies residues 1–17 (MKFAVAIAFTLLVCVFA). Intrachain disulfides connect cysteine 26-cysteine 37, cysteine 31-cysteine 51, cysteine 36-cysteine 75, cysteine 61-cysteine 83, and cysteine 77-cysteine 94. Residues 93-108 (RCQEESGKSDKSKESQ) are compositionally biased toward basic and acidic residues. The segment at 93–124 (RCQEESGKSDKSKESQGSDESEESEESKESCG) is disordered. Over residues 109 to 118 (GSDESEESEE) the composition is skewed to acidic residues.

It belongs to the neurotoxin 32 family. In terms of tissue distribution, expressed by the venom gland.

The protein localises to the secreted. The sequence is that of U33-theraphotoxin-Cg1a from Chilobrachys guangxiensis (Chinese earth tiger tarantula).